Here is a 199-residue protein sequence, read N- to C-terminus: Recombination protein RecR (199 aa).

Residues Cys-57–Cys-72 form a C4-type zinc finger. The region spanning Ser-80–Pro-175 is the Toprim domain.

It belongs to the RecR family.

Functionally, may play a role in DNA repair. It seems to be involved in an RecBC-independent recombinational process of DNA repair. It may act with RecF and RecO. This is Recombination protein RecR from Moorella thermoacetica (strain ATCC 39073 / JCM 9320).